Reading from the N-terminus, the 357-residue chain is Neurogenic differentiation factor 1 (357 aa).

The disordered stretch occupies residues 1–94 (MTKSYSESGL…GPKKKKMTKA (94 aa)). A compositionally biased stretch (acidic residues) spans 58 to 78 (EEEDEDEDLEEEEEEEEEEDD). Over residues 81–93 (PKRRGPKKKKMTK) the composition is skewed to basic residues. Positions 87–93 (KKKKMTK) match the Nuclear localization signal motif. The bHLH domain occupies 101-153 (LRRMKANARERNRMHGLNAALDNLRKVVPCYSKTQKLSKIETLRLAKNYIWAL). Phosphoserine occurs at positions 162, 259, 266, and 274. Residue Ser336 is modified to Phosphoserine; by CaMK2.

In terms of assembly, efficient DNA-binding requires dimerization with another bHLH protein. Heterodimer with TCF3/E47; the heterodimer is inhibited in presence of ID2, but not NR0B2, to E-box element. Interacts with EP300; the interaction is inhibited by NR0B2. Interacts with RREB1. Interacts with ATOH8. In terms of processing, phosphorylated by MAPK1; phosphorylation regulates heterodimerization and DNA-binding activities. Phosphorylation on Ser-266 and Ser-274 increases transactivation on the insulin promoter in glucose-stimulated insulinoma cells. Phosphorylated. In islet cells, phosphorylated on Ser-274 upon glucose stimulation; which may be required for nuclear localization. In activated neurons, phosphorylated on Ser-336 by CaMK2; which promotes dendritic growth.

The protein localises to the cytoplasm. It is found in the nucleus. Its function is as follows. Acts as a transcriptional activator: mediates transcriptional activation by binding to E box-containing promoter consensus core sequences 5'-CANNTG-3'. Associates with the p300/CBP transcription coactivator complex to stimulate transcription of the secretin gene as well as the gene encoding the cyclin-dependent kinase inhibitor CDKN1A. Contributes to the regulation of several cell differentiation pathways, like those that promote the formation of early retinal ganglion cells, inner ear sensory neurons, granule cells forming either the cerebellum or the dentate gyrus cell layer of the hippocampus, endocrine islet cells of the pancreas and enteroendocrine cells of the small intestine. Together with PAX6 or SIX3, is required for the regulation of amacrine cell fate specification. Also required for dendrite morphogenesis and maintenance in the cerebellar cortex. Associates with chromatin to enhancer regulatory elements in genes encoding key transcriptional regulators of neurogenesis. The sequence is that of Neurogenic differentiation factor 1 (Neurod1) from Rattus norvegicus (Rat).